The following is a 53-amino-acid chain: Light-harvesting protein B-808/866 beta chain (53 aa).

Met-1 is modified (N-formylmethionine). Residues 1-25 (MRDDDDLVPPKWRPLFNNQDWLLHD) are Cytoplasmic-facing. Residues His-24 and His-42 each contribute to the a bacteriochlorophyll site. Residues 26 to 48 (IVVKSFYGFGVIAAIAHLLVYLW) traverse the membrane as a helical segment. The Periplasmic segment spans residues 49–53 (KPWLP).

This sequence belongs to the antenna complex beta subunit family. The core complex is formed by different alpha and beta chains, binding bacteriochlorophyll molecules, and arranged most probably in tetrameric structures disposed around the reaction center. The non-pigmented gamma chains may constitute additional components.

It localises to the cell membrane. Antenna complexes are light-harvesting systems, which transfer the excitation energy to the reaction centers. This is Light-harvesting protein B-808/866 beta chain (puf2B) from Chloroflexus aurantiacus (strain ATCC 29366 / DSM 635 / J-10-fl).